We begin with the raw amino-acid sequence, 220 residues long: Carbonic anhydrase (220 aa).

Positions 39, 41, 98, and 101 each coordinate Zn(2+).

Belongs to the beta-class carbonic anhydrase family. Zn(2+) is required as a cofactor.

It catalyses the reaction hydrogencarbonate + H(+) = CO2 + H2O. This Pseudomonas aeruginosa (strain ATCC 15692 / DSM 22644 / CIP 104116 / JCM 14847 / LMG 12228 / 1C / PRS 101 / PAO1) protein is Carbonic anhydrase (cynT).